The sequence spans 256 residues: Pimeloyl-[acyl-carrier protein] methyl ester esterase (256 aa).

An AB hydrolase-1 domain is found at 15 to 242; it reads HLVLLHGWGL…AAHAPFISHP (228 aa). Substrate-binding positions include tryptophan 22, 82 to 83, and 143 to 147; these read SL and FLALQ. Serine 82 (nucleophile) is an active-site residue. Catalysis depends on residues aspartate 207 and histidine 235. Histidine 235 is a substrate binding site.

It belongs to the AB hydrolase superfamily. Carboxylesterase BioH family. Monomer.

Its subcellular location is the cytoplasm. It catalyses the reaction 6-carboxyhexanoyl-[ACP] methyl ester + H2O = 6-carboxyhexanoyl-[ACP] + methanol + H(+). It participates in cofactor biosynthesis; biotin biosynthesis. The physiological role of BioH is to remove the methyl group introduced by BioC when the pimeloyl moiety is complete. It allows to synthesize pimeloyl-ACP via the fatty acid synthetic pathway through the hydrolysis of the ester bonds of pimeloyl-ACP esters. The sequence is that of Pimeloyl-[acyl-carrier protein] methyl ester esterase from Escherichia coli O7:K1 (strain IAI39 / ExPEC).